A 635-amino-acid chain; its full sequence is RING finger protein 207 (635 aa).

An RING-type zinc finger spans residues 25-64 (CPLCHGQYERPCLLDCFHDFCTGCLRGRATDGRLSCPLCQ). The B box-type; atypical zinc finger occupies 93–145 (SEAVRCANCDLECSQQDAETTYFCNTCGQPLCARCREETHRARMFARHDIVAL). Residues Cys98, Cys101, Cys127, and His132 each contribute to the Zn(2+) site. Residues 422–460 (EHCRHYEDSYRGLQVEVQNLKDQVQELHRDLTKHHSLIK) are a coiled coil. A compositionally biased stretch (basic and acidic residues) spans 553–562 (QVPVDEHAEH). Residues 553-635 (QVPVDEHAEH…SGSKGACYQA (83 aa)) form a disordered region. The span at 589–598 (PNGSSWSLSS) shows a compositional bias: polar residues. The segment covering 607–622 (NQDHLRPKLEAGDEGW) has biased composition (basic and acidic residues).

As to quaternary structure, interacts with the core-glycosylated, but not the fully glycosylated form of KCNH2/HERG. Interacts with DNAJA1 and HSPA8. Interacts (via the C-terminus) with HSPA1A; this interaction additively increases KCNH2 expression.

Its subcellular location is the cytoplasm. Functionally, plays a role in cardiac repolarization possibly by stabilizing membrane expression of the potassium channel KCNH2/HERG, or by assisting its synthesis, folding or export from the endoplasmic reticulum, in a heat shock protein-dependent manner. This chain is RING finger protein 207 (Rnf207), found in Mus musculus (Mouse).